Here is a 145-residue protein sequence, read N- to C-terminus: Ribonuclease H (145 aa).

The region spanning 1–141 (MQEVTIYSDG…ADALANRGVE (141 aa)) is the RNase H type-1 domain. 4 residues coordinate Mg(2+): Asp-9, Glu-47, Asp-69, and Asp-133.

This sequence belongs to the RNase H family. As to quaternary structure, monomer. It depends on Mg(2+) as a cofactor.

The protein localises to the cytoplasm. The catalysed reaction is Endonucleolytic cleavage to 5'-phosphomonoester.. Its function is as follows. Endonuclease that specifically degrades the RNA of RNA-DNA hybrids. The protein is Ribonuclease H of Cupriavidus necator (strain ATCC 17699 / DSM 428 / KCTC 22496 / NCIMB 10442 / H16 / Stanier 337) (Ralstonia eutropha).